A 459-amino-acid polypeptide reads, in one-letter code: Phosphomethylpyrimidine synthase (459 aa).

Substrate contacts are provided by residues asparagine 80, methionine 109, tyrosine 139, histidine 175, 195–197, 236–239, and glutamate 275; these read SRG and DSLR. Histidine 279 is a Zn(2+) binding site. Substrate is bound at residue tyrosine 302. Histidine 343 lines the Zn(2+) pocket. Residues cysteine 423, cysteine 426, and cysteine 431 each coordinate [4Fe-4S] cluster.

This sequence belongs to the ThiC family. Requires [4Fe-4S] cluster as cofactor.

It carries out the reaction 5-amino-1-(5-phospho-beta-D-ribosyl)imidazole + S-adenosyl-L-methionine = 4-amino-2-methyl-5-(phosphooxymethyl)pyrimidine + CO + 5'-deoxyadenosine + formate + L-methionine + 3 H(+). Its pathway is cofactor biosynthesis; thiamine diphosphate biosynthesis. In terms of biological role, catalyzes the synthesis of the hydroxymethylpyrimidine phosphate (HMP-P) moiety of thiamine from aminoimidazole ribotide (AIR) in a radical S-adenosyl-L-methionine (SAM)-dependent reaction. In Synechocystis sp. (strain ATCC 27184 / PCC 6803 / Kazusa), this protein is Phosphomethylpyrimidine synthase.